The primary structure comprises 241 residues: Uracil-DNA glycosylase (241 aa).

The active-site Proton acceptor is aspartate 68.

This sequence belongs to the uracil-DNA glycosylase (UDG) superfamily. UNG family.

Its subcellular location is the cytoplasm. It carries out the reaction Hydrolyzes single-stranded DNA or mismatched double-stranded DNA and polynucleotides, releasing free uracil.. Excises uracil residues from the DNA which can arise as a result of misincorporation of dUMP residues by DNA polymerase or due to deamination of cytosine. The polypeptide is Uracil-DNA glycosylase (Rhizobium meliloti (strain 1021) (Ensifer meliloti)).